The chain runs to 224 residues: Ribose-5-phosphate isomerase A (224 aa).

Residues 33–36 (TGST), 86–89 (DGAD), and 99–102 (KGGG) contribute to the substrate site. E108 acts as the Proton acceptor in catalysis. A substrate-binding site is contributed by K126.

The protein belongs to the ribose 5-phosphate isomerase family. As to quaternary structure, homodimer.

It catalyses the reaction aldehydo-D-ribose 5-phosphate = D-ribulose 5-phosphate. It functions in the pathway carbohydrate degradation; pentose phosphate pathway; D-ribose 5-phosphate from D-ribulose 5-phosphate (non-oxidative stage): step 1/1. Catalyzes the reversible conversion of ribose-5-phosphate to ribulose 5-phosphate. The sequence is that of Ribose-5-phosphate isomerase A from Bordetella avium (strain 197N).